The sequence spans 400 residues: Tryptophan synthase beta chain (400 aa).

Position 92 is an N6-(pyridoxal phosphate)lysine (Lys92).

It belongs to the TrpB family. As to quaternary structure, tetramer of two alpha and two beta chains. Pyridoxal 5'-phosphate serves as cofactor.

It catalyses the reaction (1S,2R)-1-C-(indol-3-yl)glycerol 3-phosphate + L-serine = D-glyceraldehyde 3-phosphate + L-tryptophan + H2O. Its pathway is amino-acid biosynthesis; L-tryptophan biosynthesis; L-tryptophan from chorismate: step 5/5. Its function is as follows. The beta subunit is responsible for the synthesis of L-tryptophan from indole and L-serine. This is Tryptophan synthase beta chain from Neisseria meningitidis serogroup C (strain 053442).